We begin with the raw amino-acid sequence, 93 residues long: DNA-directed RNA polymerase subunit omega (93 aa).

The protein belongs to the RNA polymerase subunit omega family. The RNAP catalytic core consists of 2 alpha, 1 beta, 1 beta' and 1 omega subunit. When a sigma factor is associated with the core the holoenzyme is formed, which can initiate transcription.

The enzyme catalyses RNA(n) + a ribonucleoside 5'-triphosphate = RNA(n+1) + diphosphate. Functionally, promotes RNA polymerase assembly. Latches the N- and C-terminal regions of the beta' subunit thereby facilitating its interaction with the beta and alpha subunits. This is DNA-directed RNA polymerase subunit omega from Glaesserella parasuis serovar 5 (strain SH0165) (Haemophilus parasuis).